An 892-amino-acid chain; its full sequence is Alanine--tRNA ligase (892 aa).

Zn(2+) contacts are provided by His-574, His-578, Cys-677, and His-681.

It belongs to the class-II aminoacyl-tRNA synthetase family. Zn(2+) serves as cofactor.

It localises to the cytoplasm. It catalyses the reaction tRNA(Ala) + L-alanine + ATP = L-alanyl-tRNA(Ala) + AMP + diphosphate. Functionally, catalyzes the attachment of alanine to tRNA(Ala) in a two-step reaction: alanine is first activated by ATP to form Ala-AMP and then transferred to the acceptor end of tRNA(Ala). Also edits incorrectly charged Ser-tRNA(Ala) and Gly-tRNA(Ala) via its editing domain. This Mesoplasma florum (strain ATCC 33453 / NBRC 100688 / NCTC 11704 / L1) (Acholeplasma florum) protein is Alanine--tRNA ligase.